We begin with the raw amino-acid sequence, 446 residues long: Branched-chain amino acid permease BrnQ (446 aa).

The next 12 helical transmembrane spans lie at 13-33 (ISSM…PAYL), 41-61 (LWIS…LAIA), 81-101 (KYSY…FAIP), 120-140 (MAKS…MLFF), 154-174 (FLTP…LLHP), 196-216 (VLAG…IIVI), 237-257 (TGVL…LVGA), 285-305 (GAVI…IGLI), 325-345 (WAII…TTII), 347-367 (FSLP…LLAL), 381-401 (IMTA…LPAG), and 421-441 (GLGW…KGVI).

Belongs to the branched chain amino acid transporter family.

It localises to the cell membrane. Leucine uptake is inhibited by the proton ionophore carbonyl cyanide m-chlorophenylhydrazone (CCCP). Functionally, branched chain amino acid transport system which is involved in the uptake of leucine, valine and isoleucine. The proton motive force is probably the driving force for transport. This is Branched-chain amino acid permease BrnQ from Lactobacillus delbrueckii subsp. lactis.